The chain runs to 141 residues: HTH-type transcriptional repressor NsrR (141 aa).

One can recognise an HTH rrf2-type domain in the interval 2-129; that stretch reads QLTNFTDFGL…DKHTIQDMLT (128 aa). Positions 28-51 form a DNA-binding region, H-T-H motif; sequence ITVVTETFDVSRNHMVKIINKLGQ. 3 residues coordinate [2Fe-2S] cluster: cysteine 91, cysteine 96, and cysteine 102.

Requires [2Fe-2S] cluster as cofactor.

Its function is as follows. Nitric oxide-sensitive repressor of genes involved in protecting the cell against nitrosative stress. May require iron for activity. The sequence is that of HTH-type transcriptional repressor NsrR from Aliivibrio fischeri (strain ATCC 700601 / ES114) (Vibrio fischeri).